We begin with the raw amino-acid sequence, 321 residues long: Glutaminase (321 aa).

Residues S69, N120, E165, N172, Y196, Y248, and V266 each contribute to the substrate site.

It belongs to the glutaminase family. In terms of assembly, homotetramer.

The enzyme catalyses L-glutamine + H2O = L-glutamate + NH4(+). This chain is Glutaminase, found in Parabacteroides distasonis (strain ATCC 8503 / DSM 20701 / CIP 104284 / JCM 5825 / NCTC 11152).